A 121-amino-acid polypeptide reads, in one-letter code: Spermidine export protein MdtJ (121 aa).

4 helical membrane-spanning segments follow: residues 1-21 (MYIY…GTLS), 32-52 (GGFI…SFAV), 55-75 (IALG…ITLF), and 82-102 (ESLS…IVLI).

It belongs to the drug/metabolite transporter (DMT) superfamily. Small multidrug resistance (SMR) (TC 2.A.7.1) family. MdtJ subfamily. As to quaternary structure, forms a complex with MdtI.

The protein resides in the cell inner membrane. Functionally, catalyzes the excretion of spermidine. In Escherichia coli O127:H6 (strain E2348/69 / EPEC), this protein is Spermidine export protein MdtJ.